We begin with the raw amino-acid sequence, 724 residues long: Acyl-coenzyme A oxidase 2 (724 aa).

The interval 1-23 is disordered; sequence MALISNLKDEYDHPTKTDPDTNP. A compositionally biased stretch (basic and acidic residues) spans 7-21; sequence LKDEYDHPTKTDPDT.

Belongs to the acyl-CoA oxidase family. Requires FAD as cofactor.

Its subcellular location is the peroxisome. The catalysed reaction is a 2,3-saturated acyl-CoA + O2 = a (2E)-enoyl-CoA + H2O2. It functions in the pathway lipid metabolism; peroxisomal fatty acid beta-oxidation. The chain is Acyl-coenzyme A oxidase 2 (POX2) from Candida maltosa (Yeast).